A 92-amino-acid polypeptide reads, in one-letter code: DNA-directed RNA polymerase subunit omega (92 aa).

Belongs to the RNA polymerase subunit omega family. The RNAP catalytic core consists of 2 alpha, 1 beta, 1 beta' and 1 omega subunit. When a sigma factor is associated with the core the holoenzyme is formed, which can initiate transcription.

The catalysed reaction is RNA(n) + a ribonucleoside 5'-triphosphate = RNA(n+1) + diphosphate. Functionally, promotes RNA polymerase assembly. Latches the N- and C-terminal regions of the beta' subunit thereby facilitating its interaction with the beta and alpha subunits. In Shewanella sp. (strain ANA-3), this protein is DNA-directed RNA polymerase subunit omega.